We begin with the raw amino-acid sequence, 663 residues long: NAD(P)H-quinone oxidoreductase subunit 5, chloroplastic (663 aa).

The next 16 helical transmembrane spans lie at 11–31 (WLIPMLPFLSAFVAGFGLISF), 41–61 (LYGLISTITVFFSMIISMNLL), 89–109 (FFIDPLSSLMLFLVTSVAVLV), 126–146 (FFAYLSLFTASMLGLVLSPNL), 149–169 (IYIFWELVGMCSYLLIGFWFT), 189–209 (FCLLLGILGLYWFTNSFDFIT), 224–244 (HLYFFIFCSFLLFCGPIAKSA), 260–280 (TPISALIHAATMVAAGIFLVA), 292–312 (IMNLITCIGILTAFLGSTIAL), 329–349 (LGYMMVAMGIGSYKAGLFHLV), 398–418 (FTFLIGTLSLCGVPPFACFWS), 436–456 (IAWITAGLTGFYMFRVYLLAF), 482–502 (LYMLIPLIILSFLSLFIGFIS), 528–548 (ILLNFSSIGVALIGMIIAYSI), 607–627 (WLFDGVVNLTGISTLLGGQSL), and 635–655 (VSSYLFSILIGALVLFFFLPL).

The protein belongs to the complex I subunit 5 family. In terms of assembly, NDH is composed of at least 16 different subunits, 5 of which are encoded in the nucleus.

The protein localises to the plastid. It localises to the chloroplast thylakoid membrane. It carries out the reaction a plastoquinone + NADH + (n+1) H(+)(in) = a plastoquinol + NAD(+) + n H(+)(out). It catalyses the reaction a plastoquinone + NADPH + (n+1) H(+)(in) = a plastoquinol + NADP(+) + n H(+)(out). Functionally, NDH shuttles electrons from NAD(P)H:plastoquinone, via FMN and iron-sulfur (Fe-S) centers, to quinones in the photosynthetic chain and possibly in a chloroplast respiratory chain. The immediate electron acceptor for the enzyme in this species is believed to be plastoquinone. Couples the redox reaction to proton translocation, and thus conserves the redox energy in a proton gradient. The protein is NAD(P)H-quinone oxidoreductase subunit 5, chloroplastic (ndhF) of Chara vulgaris (Common stonewort).